A 910-amino-acid polypeptide reads, in one-letter code: Staphylococcal nuclease domain-containing protein 1 (910 aa).

A2 bears the N-acetylalanine mark. TNase-like domains lie at T18–E166, K193–D328, and K341–K496. T103 is subject to Phosphothreonine. At K193 the chain carries N6-acetyllysine. Residue T240 is modified to Phosphothreonine. 2 short sequence motifs (nuclear localization signal) span residues R321–I325 and K388–P392. The residue at position 426 (S426) is a Phosphoserine. K513 participates in a covalent cross-link: Glycyl lysine isopeptide (Lys-Gly) (interchain with G-Cter in SUMO2). The 136-residue stretch at G525–H660 folds into the TNase-like 4 domain. K641 bears the N6-acetyllysine mark. S645 carries the post-translational modification Phosphoserine. The 59-residue stretch at A729–R787 folds into the Tudor domain. T779 is subject to Phosphothreonine. S781, S785, and S909 each carry phosphoserine.

Forms a ternary complex with STAT6 and POLR2A. Associates with the RNA-induced silencing complex (RISC). Interacts with the RISC components AGO2, FMR1 and TNRC6A. Interacts with GTF2E1 and GTF2E2. Interacts with PIM1. Interacts with STAT5. Interacts with SYT11 (via C2 2 domain); the interaction with SYT11 is direct. In terms of assembly, (Microbial infection) Interacts with EAV NSP1. Binds to acidic transactivation domain of EBNA2. Interacts with SARS-CoV-2 NSP9. Post-translationally, phosphorylated by PIM1 in vitro. As to expression, ubiquitously expressed.

The protein resides in the cytoplasm. It localises to the nucleus. It is found in the melanosome. The enzyme catalyses Endonucleolytic cleavage to nucleoside 3'-phosphates and 3'-phosphooligonucleotide end-products.. Endonuclease that mediates miRNA decay of both protein-free and AGO2-loaded miRNAs. As part of its function in miRNA decay, regulates mRNAs involved in G1-to-S phase transition. Functions as a bridging factor between STAT6 and the basal transcription factor. Plays a role in PIM1 regulation of MYB activity. Functions as a transcriptional coactivator for STAT5. In terms of biological role, (Microbial infection) Functions as a transcriptional coactivator for the Epstein-Barr virus nuclear antigen 2 (EBNA2). Functionally, (Microbial infection) Promotes SARS-CoV-2 RNA synthesis by binding to negative-sense RNA and the viral protein nsp9. The chain is Staphylococcal nuclease domain-containing protein 1 (SND1) from Homo sapiens (Human).